A 198-amino-acid chain; its full sequence is NAD(P)H dehydrogenase (quinone) (198 aa).

One can recognise a Flavodoxin-like domain in the interval 4 to 189 (ILVLYYSMYG…AIARYQGEHV (186 aa)). FMN-binding positions include 10 to 15 (SMYGHI) and 78 to 80 (TRF). Tyr-12 contributes to the NAD(+) binding site. Residue Trp-98 participates in substrate binding. Residues 113–118 (STGTGG) and His-133 contribute to the FMN site.

It belongs to the WrbA family. The cofactor is FMN.

It carries out the reaction a quinone + NADH + H(+) = a quinol + NAD(+). The enzyme catalyses a quinone + NADPH + H(+) = a quinol + NADP(+). This Klebsiella pneumoniae (strain 342) protein is NAD(P)H dehydrogenase (quinone).